Here is a 331-residue protein sequence, read N- to C-terminus: Cilia- and flagella-associated protein 119 (331 aa).

Ser34 carries the post-translational modification Phosphoserine. Disordered stretches follow at residues 236-271 (LWPESETEKEESKEMEEQAVTPQKEELETVAPPEPE) and 309-331 (SSKLTALERPFQLPPGKGKSKTK). A coiled-coil region spans residues 286 to 317 (VNKELEQLQGLVEERLKASEERLSSKLTALER).

The protein localises to the cell projection. It localises to the cilium. It is found in the flagellum. Its subcellular location is the cytoplasmic vesicle. The protein resides in the secretory vesicle. The protein localises to the acrosome. It localises to the cytoplasm. In Homo sapiens (Human), this protein is Cilia- and flagella-associated protein 119.